A 427-amino-acid chain; its full sequence is tRNA(Ile)-lysidine synthase (427 aa).

27–32 is a binding site for ATP; it reads SGGVDS.

It belongs to the tRNA(Ile)-lysidine synthase family.

It localises to the cytoplasm. It carries out the reaction cytidine(34) in tRNA(Ile2) + L-lysine + ATP = lysidine(34) in tRNA(Ile2) + AMP + diphosphate + H(+). Its function is as follows. Ligates lysine onto the cytidine present at position 34 of the AUA codon-specific tRNA(Ile) that contains the anticodon CAU, in an ATP-dependent manner. Cytidine is converted to lysidine, thus changing the amino acid specificity of the tRNA from methionine to isoleucine. This chain is tRNA(Ile)-lysidine synthase, found in Streptococcus equi subsp. zooepidemicus (strain H70).